The primary structure comprises 1159 residues: ABC transporter G family member 24 (1159 aa).

Helical transmembrane passes span 11 to 31 (FNSILKSILLLLLLFINGNNC) and 415 to 435 (VGSGVGFIGLTLLIGAIFLIF). The 254-residue stretch at 454-707 (LSFHNISCYV…FIKQKIAGMT (254 aa)) folds into the ABC transporter domain. Residue 497 to 504 (GLSGSGKT) participates in ATP binding. A disordered region spans residues 752-846 (QSTSPALSSN…DNNNKNNDDD (95 aa)). Low complexity-rich tracts occupy residues 759–768 (SSNSNNSDIN) and 775–784 (INNPHNQNIH). The segment covering 785-795 (HQQHHHHHRHI) has biased composition (basic residues). Positions 822 to 841 (DNINNNNNNNKVKNNDNNNK) are enriched in low complexity. The ABC transmembrane type-2 domain occupies 902-1154 (FLLRTTYFVH…LLAYVFLRFL (253 aa)). 6 consecutive transmembrane segments (helical) span residues 909–929 (FVHIFVGLTLGYLFWKLPANL), 937–957 (FGAMFFMTALLSFGSITSLDL), 1005–1025 (YMIGLRPGILHFIYFLISLVL), 1047–1067 (ANMVSILLLFVFLLFDGFLLA), 1074–1094 (YLIGLVWISFMSYGLEIPVVN), and 1135–1155 (VLLGMIVGYLLLAYVFLRFLV).

This sequence belongs to the ABC transporter superfamily. ABCG family. Eye pigment precursor importer (TC 3.A.1.204) subfamily.

The protein localises to the membrane. This chain is ABC transporter G family member 24 (abcG24), found in Dictyostelium discoideum (Social amoeba).